A 213-amino-acid polypeptide reads, in one-letter code: Octanoyltransferase (213 aa).

A BPL/LPL catalytic domain is found at 32–207 (ESTLDEIWLV…NILALLNNPD (176 aa)). Substrate-binding positions include 71 to 78 (RGGQVTYH), 138 to 140 (SLG), and 151 to 153 (GLA). The Acyl-thioester intermediate role is filled by Cys-169.

It belongs to the LipB family.

It is found in the cytoplasm. It catalyses the reaction octanoyl-[ACP] + L-lysyl-[protein] = N(6)-octanoyl-L-lysyl-[protein] + holo-[ACP] + H(+). The protein operates within protein modification; protein lipoylation via endogenous pathway; protein N(6)-(lipoyl)lysine from octanoyl-[acyl-carrier-protein]: step 1/2. Catalyzes the transfer of endogenously produced octanoic acid from octanoyl-acyl-carrier-protein onto the lipoyl domains of lipoate-dependent enzymes. Lipoyl-ACP can also act as a substrate although octanoyl-ACP is likely to be the physiological substrate. In Escherichia coli O17:K52:H18 (strain UMN026 / ExPEC), this protein is Octanoyltransferase.